The following is a 237-amino-acid chain: Ribosomal RNA small subunit methyltransferase G (237 aa).

S-adenosyl-L-methionine contacts are provided by residues glycine 78, phenylalanine 83, alanine 129–glutamate 130, and arginine 148.

Belongs to the methyltransferase superfamily. RNA methyltransferase RsmG family.

The protein localises to the cytoplasm. Functionally, specifically methylates the N7 position of a guanine in 16S rRNA. In Streptococcus equi subsp. zooepidemicus (strain MGCS10565), this protein is Ribosomal RNA small subunit methyltransferase G.